The following is a 1507-amino-acid chain: Chromatin-remodeling ATPase INO80 (1507 aa).

Disordered regions lie at residues 30 to 82 and 428 to 452; these read PEDE…DAED and RKKQ…KRQQ. A compositionally biased stretch (polar residues) spans 38–67; sequence GSSSQDESRSTQGGVVANYSNGSKSRMNAS. Positions 350–475 constitute a DBINO domain; the sequence is AWINIVRRDI…SHFMQNKTDS (126 aa). Residues 428 to 450 are compositionally biased toward basic and acidic residues; the sequence is RKKQEKEAAEAFKREQEQRESKR. The 172-residue stretch at 598–769 folds into the Helicase ATP-binding domain; sequence VNCYEQGLNG…WALLHFIMPM (172 aa). 611–618 contacts ATP; the sequence is DEMGLGKT. Residues 1210–1360 enclose the Helicase C-terminal domain; sequence TLDILLKRLR…QLVMTGGHVQ (151 aa). Positions 1415–1507 are disordered; that stretch reads LEELEDVDRQ…KGFDPSSSAN (93 aa). The segment covering 1491 to 1507 has biased composition (polar residues); that stretch reads ASVTESNKGFDPSSSAN.

The protein belongs to the SNF2/RAD54 helicase family. Component of the INO80 chromatin-remodeling complex. Associates with REF6/EIN6.

The protein resides in the nucleus. The catalysed reaction is ATP + H2O = ADP + phosphate + H(+). In terms of biological role, ATPase component of the chromatin remodeling INO80 complex which is involved in transcriptional regulation, DNA replication and DNA repair. Binds DNA. As part of the INO80 complex, remodels chromatin by shifting nucleosomes. The INO80 complex controls ethylene-induced H2A.Z eviction dynamics. Positive regulator of homologous recombination, but not an essential component of homologous recombination. Not involved in the illegitimate repair pathway. This is Chromatin-remodeling ATPase INO80 from Arabidopsis thaliana (Mouse-ear cress).